The primary structure comprises 416 residues: Choline/ethanolaminephosphotransferase 1 (416 aa).

The disordered stretch occupies residues 1–20; that stretch reads MSGHRSTRKRCGDSHPESPV. A Phosphoserine modification is found at Ser18. Residue Thr40 is modified to Phosphothreonine. Asn86 serves as a coordination point for CDP-choline. The next 2 helical transmembrane spans lie at 89–108 and 116–133; these read TIIG…FYCP and LWAY…QSLD. Asp133 contributes to the Mg(2+) binding site. The N-linked (GlcNAc...) asparagine glycan is linked to Asn144. Glu151 is a binding site for CDP-choline. Position 154 (Asp154) interacts with Mg(2+). The active-site Proton acceptor is the His155. 8 helical membrane passes run 156 to 176, 180 to 199, 210 to 230, 246 to 267, 286 to 306, 315 to 334, 349 to 363, and 368 to 388; these read GCDS…VQLG, DWMF…AHWQ, IIDV…AVIG, MKLL…NYFR, VLSP…IYKK, HPCL…TNKL, TAFI…DQYF, and DEYI…IRYC. Residue Asp158 participates in Mg(2+) binding.

The protein belongs to the CDP-alcohol phosphatidyltransferase class-I family. Homodimer. Requires Mg(2+) as cofactor. Mn(2+) serves as cofactor.

It localises to the endoplasmic reticulum membrane. The protein localises to the nucleus membrane. The enzyme catalyses CDP-ethanolamine + a 1,2-diacyl-sn-glycerol = a 1,2-diacyl-sn-glycero-3-phosphoethanolamine + CMP + H(+). It carries out the reaction CDP-choline + a 1,2-diacyl-sn-glycerol = a 1,2-diacyl-sn-glycero-3-phosphocholine + CMP + H(+). The catalysed reaction is 1-O-alkyl-2-acyl-sn-glycerol + CDP-choline = a 1-O-alkyl-2-acyl-sn-glycero-3-phosphocholine + CMP + H(+). It catalyses the reaction a 1-O-(1Z-alkenyl)-2-acyl-sn-glycerol + CDP-choline = a 1-O-(1Z-alkenyl)-2-acyl-sn-glycero-3-phosphocholine + CMP + H(+). The enzyme catalyses 1,2-dioctanoyl-sn-glycerol + CDP-choline = 1,2-dioctanoyl-sn-glycero-3-phosphocholine + CMP + H(+). It carries out the reaction 1,2-didecanoyl-sn-glycerol + CDP-choline = 1,2-didecanoyl-sn-glycero-3-phosphocholine + CMP + H(+). The catalysed reaction is CDP-choline + 1,2-di-(9Z-octadecenoyl)-sn-glycerol = 1,2-di-(9Z-octadecenoyl)-sn-glycero-3-phosphocholine + CMP + H(+). It catalyses the reaction 1-hexadecanoyl-2-(9Z-octadecenoyl)-sn-glycerol + CDP-choline = 1-hexadecanoyl-2-(9Z-octadecenoyl)-sn-glycero-3-phosphocholine + CMP + H(+). The enzyme catalyses CDP-ethanolamine + 1,2-di-(9Z-octadecenoyl)-sn-glycerol = 1,2-di-(9Z-octadecenoyl)-sn-glycero-3-phosphoethanolamine + CMP + H(+). It carries out the reaction 1-hexadecanoyl-2-(9Z-octadecenoyl)-sn-glycerol + CDP-ethanolamine = 1-hexadecanoyl-2-(9Z-octadecenoyl)-sn-glycero-3-phosphoethanolamine + CMP + H(+). The catalysed reaction is 1-hexadecanoyl-2-(4Z,7Z,10Z,13Z,16Z,19Z-docosahexaenoyl)-sn-glycerol + CDP-choline = 1-hexadecanoyl-2-(4Z,7Z,10Z,13Z,16Z,19Z-docosahexaenoyl)-sn-glycero-3-phosphocholine + CMP + H(+). It catalyses the reaction 1,2-di-(9Z-hexadecenoyl)-sn-glycerol + CDP-choline = 1,2-di-(9Z-hexadecenoyl)-sn-glycero-3-phosphocholine + CMP + H(+). The enzyme catalyses 1,2-di-(9Z-hexadecenoyl)-sn-glycerol + CDP-ethanolamine = 1,2-di-(9Z-hexadecenoyl)-sn-glycero-3-phosphoethanolamine + CMP + H(+). It carries out the reaction 1-O-hexadecyl-2-acetyl-sn-glycerol + CDP-choline = 1-O-hexadecyl-2-acetyl-sn-glycero-3-phosphocholine + CMP + H(+). The catalysed reaction is 1-O-hexadecyl-2-(5Z,8Z,11Z,14Z-eicosatetraenoyl)-sn-glycerol + CDP-choline = 1-O-hexadecyl-2-(5Z,8Z,11Z,14Z)-eicosatetraenoyl-sn-glycero-3-phosphocholine + CMP + H(+). It functions in the pathway phospholipid metabolism; phosphatidylethanolamine biosynthesis; phosphatidylethanolamine from ethanolamine: step 3/3. The protein operates within phospholipid metabolism; phosphatidylcholine biosynthesis; phosphatidylcholine from phosphocholine: step 2/2. In terms of biological role, catalyzes both phosphatidylcholine and phosphatidylethanolamine biosynthesis from CDP-choline and CDP-ethanolamine, respectively. Involved in protein-dependent process of phospholipid transport to distribute phosphatidyl choline to the lumenal surface. Has a higher cholinephosphotransferase activity than ethanolaminephosphotransferase activity. The protein is Choline/ethanolaminephosphotransferase 1 of Mus musculus (Mouse).